The primary structure comprises 264 residues: S-adenosylmethionine decarboxylase proenzyme (264 aa).

Ser-112 serves as the catalytic Schiff-base intermediate with substrate; via pyruvic acid. Residue Ser-112 is modified to Pyruvic acid (Ser); by autocatalysis. Residue His-117 is the Proton acceptor; for processing activity of the active site. The Proton donor; for catalytic activity role is filled by Cys-140.

This sequence belongs to the prokaryotic AdoMetDC family. Type 2 subfamily. Heterooctamer of four alpha and four beta chains arranged as a tetramer of alpha/beta heterodimers. The cofactor is pyruvate. Is synthesized initially as an inactive proenzyme. Formation of the active enzyme involves a self-maturation process in which the active site pyruvoyl group is generated from an internal serine residue via an autocatalytic post-translational modification. Two non-identical subunits are generated from the proenzyme in this reaction, and the pyruvate is formed at the N-terminus of the alpha chain, which is derived from the carboxyl end of the proenzyme. The post-translation cleavage follows an unusual pathway, termed non-hydrolytic serinolysis, in which the side chain hydroxyl group of the serine supplies its oxygen atom to form the C-terminus of the beta chain, while the remainder of the serine residue undergoes an oxidative deamination to produce ammonia and the pyruvoyl group blocking the N-terminus of the alpha chain.

It carries out the reaction S-adenosyl-L-methionine + H(+) = S-adenosyl 3-(methylsulfanyl)propylamine + CO2. Its pathway is amine and polyamine biosynthesis; S-adenosylmethioninamine biosynthesis; S-adenosylmethioninamine from S-adenosyl-L-methionine: step 1/1. Its function is as follows. Catalyzes the decarboxylation of S-adenosylmethionine to S-adenosylmethioninamine (dcAdoMet), the propylamine donor required for the synthesis of the polyamines spermine and spermidine from the diamine putrescine. The polypeptide is S-adenosylmethionine decarboxylase proenzyme (Photorhabdus laumondii subsp. laumondii (strain DSM 15139 / CIP 105565 / TT01) (Photorhabdus luminescens subsp. laumondii)).